The following is a 923-amino-acid chain: MLEDEYQLEFFKNNGFVRKQCQSCGKFFWTRDLDRKTCGDAPCDPYTFIGNPIFSREFDISQMREYYLSFFEEKGHTRINRYPVVARWRDDLYLTIASIADFQPFVTSGQVPPPANPLTISQPCIRLNDLDSVGRSGRHLTTFEMMAHHAFNKRDHEIYWKEHAMELCDELLTSLKLDPLAVSYKEEPWAGGGNAGPCVEVLVHGLELATLVFMDLKADKKGDVLIKGETYSKMDNYIVDTGYGLERFVWASKGSPTIYDALFPGIVNELMGLAGLEHELDNSEYANILAQNARLAGFMDVSEQSNLLELRKKVASSIGMTVDKLSAIMEPVEKVYAITDHTRCLTFMLGDGIIPSNVKAGYLARLVIRRTLRMMDDLDIRIPLSEIMDMHIKNMPEYPEFRENFPVIQDILVSEEEKFRNTMEKGRRIIQKSASHFKKTGEKIPLSQLTELYDSHGIPPEMAKEVASEIGVGVEFPDNFYSIIGELHNKAEEKEEEVVPFADRLKHLPKTKRSFYDEPTRLEFEAVVLDIFDNNIVLDNTFFYAEGGGQPADMGTIATAYAVYKVVDVQVYDGVIVHTIENPDGNLDIRKGDIVNGKVDEKRRMTLARHHTATHIVNDAARKVLGTHIWQAGAQKFEDHSRLDLSHYKHISPDELKQIELLANRMVMENKRVVTEWMSRTEAEQEYGFGLYQGGVPPGEKIRVVKVGDDVEACAGTHCVSTGVVGPIKILRTERIQDGVERVEFAAGVAAVRAMQKIDSLLSDSAKTLSVPPEQLPASVERFFGEWKDLKKENEKLKEEIARARVYRLLGGASEVAGLKVIAEFIPEADSLELQKTATELLKHEDVVTLLASDAEGVKLVASAGQKALSCGINAGSLVREMSKLVSGGGGGKPALAMGGGTDPSKIQDALARGLELVKEACK.

Residues histidine 611, histidine 615, cysteine 714, and histidine 718 each contribute to the Zn(2+) site.

It belongs to the class-II aminoacyl-tRNA synthetase family. Requires Zn(2+) as cofactor.

The protein resides in the cytoplasm. It carries out the reaction tRNA(Ala) + L-alanine + ATP = L-alanyl-tRNA(Ala) + AMP + diphosphate. Its function is as follows. Catalyzes the attachment of alanine to tRNA(Ala) in a two-step reaction: alanine is first activated by ATP to form Ala-AMP and then transferred to the acceptor end of tRNA(Ala). Also edits incorrectly charged Ser-tRNA(Ala) and Gly-tRNA(Ala) via its editing domain. The chain is Alanine--tRNA ligase from Methanosarcina barkeri (strain Fusaro / DSM 804).